A 692-amino-acid polypeptide reads, in one-letter code: Elongation factor G (692 aa).

The region spanning 8 to 283 (DHVRNIGIMA…AVVDYFPSPS (276 aa)) is the tr-type G domain. Residues 17–24 (AHIDAGKT), 81–85 (DTPGH), and 135–138 (NKMD) contribute to the GTP site.

The protein belongs to the TRAFAC class translation factor GTPase superfamily. Classic translation factor GTPase family. EF-G/EF-2 subfamily.

The protein resides in the cytoplasm. Functionally, catalyzes the GTP-dependent ribosomal translocation step during translation elongation. During this step, the ribosome changes from the pre-translocational (PRE) to the post-translocational (POST) state as the newly formed A-site-bound peptidyl-tRNA and P-site-bound deacylated tRNA move to the P and E sites, respectively. Catalyzes the coordinated movement of the two tRNA molecules, the mRNA and conformational changes in the ribosome. This is Elongation factor G from Magnetococcus marinus (strain ATCC BAA-1437 / JCM 17883 / MC-1).